The chain runs to 272 residues: Acyl-[acyl-carrier-protein]--UDP-N-acetylglucosamine O-acyltransferase (272 aa).

It belongs to the transferase hexapeptide repeat family. LpxA subfamily. As to quaternary structure, homotrimer.

The protein resides in the cytoplasm. It carries out the reaction a (3R)-hydroxyacyl-[ACP] + UDP-N-acetyl-alpha-D-glucosamine = a UDP-3-O-[(3R)-3-hydroxyacyl]-N-acetyl-alpha-D-glucosamine + holo-[ACP]. It functions in the pathway glycolipid biosynthesis; lipid IV(A) biosynthesis; lipid IV(A) from (3R)-3-hydroxytetradecanoyl-[acyl-carrier-protein] and UDP-N-acetyl-alpha-D-glucosamine: step 1/6. In terms of biological role, involved in the biosynthesis of lipid A, a phosphorylated glycolipid that anchors the lipopolysaccharide to the outer membrane of the cell. The protein is Acyl-[acyl-carrier-protein]--UDP-N-acetylglucosamine O-acyltransferase of Rhizobium johnstonii (strain DSM 114642 / LMG 32736 / 3841) (Rhizobium leguminosarum bv. viciae).